The chain runs to 378 residues: Chaperone protein DnaJ (378 aa).

The J domain occupies 5 to 70 (DFYEVLGLSK…QKRAAYDQYG (66 aa)). The CR-type zinc-finger motif lies at 133–211 (GITKEIRIPT…CHGDGRVERY (79 aa)). Zn(2+)-binding residues include C146, C149, C163, C166, C185, C188, C199, and C202. CXXCXGXG motif repeat units follow at residues 146–153 (CDKCHGSG), 163–170 (CSTCHGAG), 185–192 (CPTCHGRG), and 199–206 (CSKCHGDG).

It belongs to the DnaJ family. As to quaternary structure, homodimer. Requires Zn(2+) as cofactor.

Its subcellular location is the cytoplasm. In terms of biological role, participates actively in the response to hyperosmotic and heat shock by preventing the aggregation of stress-denatured proteins and by disaggregating proteins, also in an autonomous, DnaK-independent fashion. Unfolded proteins bind initially to DnaJ; upon interaction with the DnaJ-bound protein, DnaK hydrolyzes its bound ATP, resulting in the formation of a stable complex. GrpE releases ADP from DnaK; ATP binding to DnaK triggers the release of the substrate protein, thus completing the reaction cycle. Several rounds of ATP-dependent interactions between DnaJ, DnaK and GrpE are required for fully efficient folding. Also involved, together with DnaK and GrpE, in the DNA replication of plasmids through activation of initiation proteins. This Proteus mirabilis (strain HI4320) protein is Chaperone protein DnaJ.